We begin with the raw amino-acid sequence, 205 residues long: Holliday junction branch migration complex subunit RuvA (205 aa).

Residues 1-62 (MFEYVTGYVE…EDIMALYGFK (62 aa)) are domain I. Positions 63–141 (TREERLLFTK…DVVPDAFVDL (79 aa)) are domain II. A flexible linker region spans residues 142–152 (FSDEERFDEKK). The tract at residues 153–205 (GSSAELDEALEALRALGYAEREVSRVVPELLKESLTTDQYIKKALSLLLNGKR) is domain III.

This sequence belongs to the RuvA family. In terms of assembly, homotetramer. Forms an RuvA(8)-RuvB(12)-Holliday junction (HJ) complex. HJ DNA is sandwiched between 2 RuvA tetramers; dsDNA enters through RuvA and exits via RuvB. An RuvB hexamer assembles on each DNA strand where it exits the tetramer. Each RuvB hexamer is contacted by two RuvA subunits (via domain III) on 2 adjacent RuvB subunits; this complex drives branch migration. In the full resolvosome a probable DNA-RuvA(4)-RuvB(12)-RuvC(2) complex forms which resolves the HJ.

Its subcellular location is the cytoplasm. Functionally, the RuvA-RuvB-RuvC complex processes Holliday junction (HJ) DNA during genetic recombination and DNA repair, while the RuvA-RuvB complex plays an important role in the rescue of blocked DNA replication forks via replication fork reversal (RFR). RuvA specifically binds to HJ cruciform DNA, conferring on it an open structure. The RuvB hexamer acts as an ATP-dependent pump, pulling dsDNA into and through the RuvAB complex. HJ branch migration allows RuvC to scan DNA until it finds its consensus sequence, where it cleaves and resolves the cruciform DNA. In Bacillus cereus (strain AH187), this protein is Holliday junction branch migration complex subunit RuvA.